We begin with the raw amino-acid sequence, 467 residues long: FAD-dependent oxidoreductase dbaF (467 aa).

Positions 1-20 (MKSVLASGALTLAFSLAALA) are cleaved as a signal peptide. Asn-96, Asn-134, Asn-337, Asn-391, and Asn-451 each carry an N-linked (GlcNAc...) asparagine glycan.

This sequence belongs to the beta-cyclopiazonate dehydrogenase family. FAD is required as a cofactor.

It participates in secondary metabolite biosynthesis. FAD-dependent oxidoreductase; part of the gene cluster that mediates the biosynthesis of the antibiotic 2,4-dihydroxy-3-methyl-6-(2-oxopropyl)benzaldehyde (DHMBA) and its derivatives. The direct non-reducing polyketide synthase dbaI product is 2,4-dihydroxy-3-methyl-6-(2-oxopropyl)benzaldehyde (DHMBA), produced by condensation of one acetyl-CoA starter unit with 4 malonyl-CoA units and one methylation step. The FAD-dependent monooxygenase dbaH is responsible for the synthesis of yellow pigments derived from the oxidation of DHMBA. The roles of dbaB, C, E and F have still to be determined. The sequence is that of FAD-dependent oxidoreductase dbaF from Emericella nidulans (strain FGSC A4 / ATCC 38163 / CBS 112.46 / NRRL 194 / M139) (Aspergillus nidulans).